A 165-amino-acid polypeptide reads, in one-letter code: 2-C-methyl-D-erythritol 2,4-cyclodiphosphate synthase (165 aa).

Positions 12 and 14 each coordinate a divalent metal cation. 4-CDP-2-C-methyl-D-erythritol 2-phosphate contacts are provided by residues 12 to 14 and 38 to 39; these read DVH and HS. Histidine 46 is a binding site for a divalent metal cation. 4-CDP-2-C-methyl-D-erythritol 2-phosphate contacts are provided by residues 60–62, 65–69, phenylalanine 143, and arginine 146; these read DIG and FPDTD.

This sequence belongs to the IspF family. Homotrimer. A divalent metal cation serves as cofactor.

The enzyme catalyses 4-CDP-2-C-methyl-D-erythritol 2-phosphate = 2-C-methyl-D-erythritol 2,4-cyclic diphosphate + CMP. Its pathway is isoprenoid biosynthesis; isopentenyl diphosphate biosynthesis via DXP pathway; isopentenyl diphosphate from 1-deoxy-D-xylulose 5-phosphate: step 4/6. Functionally, involved in the biosynthesis of isopentenyl diphosphate (IPP) and dimethylallyl diphosphate (DMAPP), two major building blocks of isoprenoid compounds. Catalyzes the conversion of 4-diphosphocytidyl-2-C-methyl-D-erythritol 2-phosphate (CDP-ME2P) to 2-C-methyl-D-erythritol 2,4-cyclodiphosphate (ME-CPP) with a corresponding release of cytidine 5-monophosphate (CMP). This Aromatoleum aromaticum (strain DSM 19018 / LMG 30748 / EbN1) (Azoarcus sp. (strain EbN1)) protein is 2-C-methyl-D-erythritol 2,4-cyclodiphosphate synthase.